A 184-amino-acid polypeptide reads, in one-letter code: Large ribosomal subunit protein uL5 (184 aa).

It belongs to the universal ribosomal protein uL5 family. As to quaternary structure, part of the 50S ribosomal subunit; part of the 5S rRNA/L5/L18/L25 subcomplex. Contacts the 5S rRNA and the P site tRNA. Forms a bridge to the 30S subunit in the 70S ribosome.

Functionally, this is one of the proteins that bind and probably mediate the attachment of the 5S RNA into the large ribosomal subunit, where it forms part of the central protuberance. In the 70S ribosome it contacts protein S13 of the 30S subunit (bridge B1b), connecting the 2 subunits; this bridge is implicated in subunit movement. Contacts the P site tRNA; the 5S rRNA and some of its associated proteins might help stabilize positioning of ribosome-bound tRNAs. In Wolinella succinogenes (strain ATCC 29543 / DSM 1740 / CCUG 13145 / JCM 31913 / LMG 7466 / NCTC 11488 / FDC 602W) (Vibrio succinogenes), this protein is Large ribosomal subunit protein uL5.